Consider the following 64-residue polypeptide: MAIVPKRKTSKQRKRLRRSHHALDIQNLVKCSNCSQKIQQHRTCMFCGFYKNKKVEGFQARNDR.

It belongs to the bacterial ribosomal protein bL32 family.

The polypeptide is Large ribosomal subunit protein bL32 (Mycoplasma mobile (strain ATCC 43663 / 163K / NCTC 11711) (Mesomycoplasma mobile)).